A 118-amino-acid chain; its full sequence is Basic phospholipase A2 PA-9C (118 aa).

7 cysteine pairs are disulfide-bonded: Cys11/Cys71, Cys27/Cys117, Cys29/Cys45, Cys44/Cys98, Cys51/Cys91, Cys60/Cys84, and Cys78/Cys89. Ca(2+)-binding residues include Tyr28, Gly30, and Gly32. Residue His48 is part of the active site. Ca(2+) is bound at residue Asp49. Asp92 is an active-site residue.

This sequence belongs to the phospholipase A2 family. Group I subfamily. D49 sub-subfamily. Ca(2+) serves as cofactor. In terms of tissue distribution, expressed by the venom gland.

Its subcellular location is the secreted. The enzyme catalyses a 1,2-diacyl-sn-glycero-3-phosphocholine + H2O = a 1-acyl-sn-glycero-3-phosphocholine + a fatty acid + H(+). Its function is as follows. PLA2 catalyzes the calcium-dependent hydrolysis of the 2-acyl groups in 3-sn-phosphoglycerides. The protein is Basic phospholipase A2 PA-9C of Pseudechis australis (Mulga snake).